Here is a 416-residue protein sequence, read N- to C-terminus: Serine hydroxymethyltransferase (416 aa).

(6S)-5,6,7,8-tetrahydrofolate contacts are provided by residues leucine 121 and 125-127; that span reads GHL. An N6-(pyridoxal phosphate)lysine modification is found at lysine 229.

Belongs to the SHMT family. As to quaternary structure, homodimer. Pyridoxal 5'-phosphate is required as a cofactor.

It localises to the cytoplasm. The catalysed reaction is (6R)-5,10-methylene-5,6,7,8-tetrahydrofolate + glycine + H2O = (6S)-5,6,7,8-tetrahydrofolate + L-serine. It functions in the pathway one-carbon metabolism; tetrahydrofolate interconversion. Its pathway is amino-acid biosynthesis; glycine biosynthesis; glycine from L-serine: step 1/1. Functionally, catalyzes the reversible interconversion of serine and glycine with tetrahydrofolate (THF) serving as the one-carbon carrier. This reaction serves as the major source of one-carbon groups required for the biosynthesis of purines, thymidylate, methionine, and other important biomolecules. Also exhibits THF-independent aldolase activity toward beta-hydroxyamino acids, producing glycine and aldehydes, via a retro-aldol mechanism. This chain is Serine hydroxymethyltransferase, found in Bordetella avium (strain 197N).